The chain runs to 594 residues: (-)-endo-fenchol synthase, chloroplastic (594 aa).

The transit peptide at 1–50 directs the protein to the chloroplast; sequence MSSLVMHVGIVNKPAITYLPTLSRRASNLHNVSSTRLQTSCSLQLDYKPV. 4 residues coordinate Mg(2+): Asp-348, Asp-352, Asp-492, and Glu-500. The short motif at 348 to 352 is the DDXXD motif element; the sequence is DDIYD.

Belongs to the terpene synthase family. Tpsa subfamily. Mg(2+) is required as a cofactor. Mn(2+) serves as cofactor. In terms of tissue distribution, expressed at low levels in leaves.

It localises to the plastid. The protein resides in the chloroplast. The catalysed reaction is (2E)-geranyl diphosphate = alpha-pinene + diphosphate. It catalyses the reaction (2E)-geranyl diphosphate + H2O = (1S,2S,4R)-endo-fenchol + diphosphate. The enzyme catalyses (2E)-geranyl diphosphate = limonene + diphosphate. It participates in secondary metabolite biosynthesis; terpenoid biosynthesis. Its function is as follows. Monoterpene synthase involved in the biosynthesis of volatile compounds widely used in aromatherapy and folk medicine, and present in culinary herbs. Mediates the conversion of (2E)-geranyl diphosphate (GPP) into alpha fenchol, limonene and alpha-pinene and, as minor compounds, into beta-myrcene, alpha-terpinolene and alpha-phellandrene. The chain is (-)-endo-fenchol synthase, chloroplastic from Lavandula stoechas (Butterfly lavender).